The sequence spans 274 residues: Large ribosomal subunit protein uL2cz (274 aa).

2 disordered regions span residues 1–25 and 224–274; these read MAIH…VKSN and NPVD…RRSK. Over residues 7–25 the composition is skewed to polar residues; sequence KTSTPSTRNGTVDSQVKSN.

Belongs to the universal ribosomal protein uL2 family. In terms of assembly, part of the 50S ribosomal subunit.

It localises to the plastid. It is found in the chloroplast. In Atropa belladonna (Belladonna), this protein is Large ribosomal subunit protein uL2cz (rpl2-A).